Here is a 504-residue protein sequence, read N- to C-terminus: Peroxisome proliferator-activated receptor gamma (504 aa).

S111 carries the phosphoserine; by MAPK modification. The nuclear receptor DNA-binding region spans A135 to F209. 2 NR C4-type zinc fingers span residues C138–C158 and C175–C197. Positions H204 to M279 are interaction with FAM120B. Positions D237–D502 constitute an NR LBD domain. K251 is covalently cross-linked (Glycyl lysine isopeptide (Lys-Gly) (interchain with G-Cter in ubiquitin)). The 9aaTAD motif lies at P494–D502.

This sequence belongs to the nuclear hormone receptor family. NR1 subfamily. Interacts with FOXO1 (acetylated form). Heterodimer with other nuclear receptors, such as RXRA. The heterodimer with the retinoic acid receptor RXRA is called adipocyte-specific transcription factor ARF6. Interacts with NCOA6 coactivator, leading to a strong increase in transcription of target genes. Interacts with coactivator PPARBP, leading to a mild increase in transcription of target genes. Interacts with NOCA7 in a ligand-inducible manner. Interacts with NCOA1 and NCOA2 LXXLL motifs. Interacts with ASXL1, ASXL2, DNTTIP2, FAM120B, MAP2K1/MEK1, NR0B2, PDPK1, PRDM16, PRMT2 and TGFB1I1. Interacts (when activated by agonist) with PPP5C. Interacts with HELZ2 and THRAP3; the interaction stimulates the transcriptional activity of PPARG. Interacts with PER2, the interaction is ligand dependent and blocks PPARG recruitment to target promoters. Interacts with NOCT. Interacts with ACTN4. Interacts (when in the liganded conformation) with GPS2. Interacts with CRY1 and CRY2 in a ligand-dependent manner. In the absence of hormonal ligand, interacts with TACC1. In macrophages, interacts with PAQR3 and STUB1; the interactions promote PPARG poylubiquitination and STUB1-mediated degradation. In terms of processing, phosphorylated at basal conditions and dephosphorylated when treated with the ligand. May be dephosphorylated by PPP5C. The phosphorylated form may be inactive and dephosphorylation induces adipogenic activity. Post-translationally, ubiquitinated by E3 ubiquitin-protein ligase complex containing FBXO9; leading to proteasomal degradation. Ubiquitinated at Lys-251 by TRIM55 leading to proteasomal degradation. Ubiquitinated by E3 ubiquitin-protein ligase STUB1/CHIP; leading to proteasomal degradation. In terms of tissue distribution, highest expression in adipose tissue and lower in spleen. Very low levels in kidney, intestine, lung and muscle.

It localises to the nucleus. Its subcellular location is the cytoplasm. Its activity is regulated as follows. PDPK1 activates its transcriptional activity independently of its kinase activity. Its function is as follows. Nuclear receptor that binds peroxisome proliferators such as hypolipidemic drugs and fatty acids. Once activated by a ligand, the nuclear receptor binds to DNA specific PPAR response elements (PPRE) and modulates the transcription of its target genes, such as acyl-CoA oxidase. It therefore controls the peroxisomal beta-oxidation pathway of fatty acids. Key regulator of adipocyte differentiation and glucose homeostasis. ARF6 acts as a key regulator of the tissue-specific adipocyte P2 (aP2) enhancer. Acts as a critical regulator of gut homeostasis by suppressing NF-kappa-B-mediated pro-inflammatory responses. Plays a role in the regulation of cardiovascular circadian rhythms by regulating the transcription of BMAL1 in the blood vessels. The protein is Peroxisome proliferator-activated receptor gamma (PPARG) of Sus scrofa (Pig).